We begin with the raw amino-acid sequence, 55 residues long: MPQLNPNPWFFIMLLSWLTFSLIIQPKLLSFTPTNPPSNKTTTHTKTTPWTWPWT.

The helical transmembrane segment at 7–24 (NPWFFIMLLSWLTFSLII) threads the bilayer. Positions 35–55 (NPPSNKTTTHTKTTPWTWPWT) are disordered. The segment covering 37–55 (PSNKTTTHTKTTPWTWPWT) has biased composition (low complexity).

The protein belongs to the ATPase protein 8 family. Component of the ATP synthase complex composed at least of ATP5F1A/subunit alpha, ATP5F1B/subunit beta, ATP5MC1/subunit c (homooctomer), MT-ATP6/subunit a, MT-ATP8/subunit 8, ATP5ME/subunit e, ATP5MF/subunit f, ATP5MG/subunit g, ATP5MK/subunit k, ATP5MJ/subunit j, ATP5F1C/subunit gamma, ATP5F1D/subunit delta, ATP5F1E/subunit epsilon, ATP5PF/subunit F6, ATP5PB/subunit b, ATP5PD/subunit d, ATP5PO/subunit OSCP. ATP synthase complex consists of a soluble F(1) head domain (subunits alpha(3) and beta(3)) - the catalytic core - and a membrane F(0) domain - the membrane proton channel (subunits c, a, 8, e, f, g, k and j). These two domains are linked by a central stalk (subunits gamma, delta, and epsilon) rotating inside the F1 region and a stationary peripheral stalk (subunits F6, b, d, and OSCP).

It localises to the mitochondrion membrane. Its function is as follows. Subunit 8, of the mitochondrial membrane ATP synthase complex (F(1)F(0) ATP synthase or Complex V) that produces ATP from ADP in the presence of a proton gradient across the membrane which is generated by electron transport complexes of the respiratory chain. ATP synthase complex consist of a soluble F(1) head domain - the catalytic core - and a membrane F(1) domain - the membrane proton channel. These two domains are linked by a central stalk rotating inside the F(1) region and a stationary peripheral stalk. During catalysis, ATP synthesis in the catalytic domain of F(1) is coupled via a rotary mechanism of the central stalk subunits to proton translocation. In vivo, can only synthesize ATP although its ATP hydrolase activity can be activated artificially in vitro. Part of the complex F(0) domain. In Chaetura pelagica (Chimney swift), this protein is ATP synthase F(0) complex subunit 8.